A 262-amino-acid polypeptide reads, in one-letter code: MLYHLNNNGVSEVVGALLTVVVIVTAAGIIYVISHPVIANSIDNVNYQNAVKNMAEIKEIVQRMKYGSEVATSKVIQLNGGSMSNARFFNFTVFTTELPPGLQGNPNPNINAIIHAAHDIEVDWYTHTLNIEIAGREIVFESGIFVKEYGSVNPIPISEPDIIVTNDTLYLSIYDFIGDYSAGGQKITINFKHNFTTIFSNVTSFELKSEFCDIWKKSFEKALNDVPSKPADFEDDDCIDNTIKIKKASGDISIIFTRVEVT.

Residues 13 to 35 (VVGALLTVVVIVTAAGIIYVISH) traverse the membrane as a helical segment.

It is found in the membrane. This is an uncharacterized protein from Archaeoglobus fulgidus (strain ATCC 49558 / DSM 4304 / JCM 9628 / NBRC 100126 / VC-16).